The following is a 201-amino-acid chain: Orotate phosphoribosyltransferase (201 aa).

113–121 (EDIITTGKS) is a 5-phospho-alpha-D-ribose 1-diphosphate binding site. T117 and R145 together coordinate orotate.

Belongs to the purine/pyrimidine phosphoribosyltransferase family. PyrE subfamily. As to quaternary structure, homodimer. The cofactor is Mg(2+).

The enzyme catalyses orotidine 5'-phosphate + diphosphate = orotate + 5-phospho-alpha-D-ribose 1-diphosphate. It participates in pyrimidine metabolism; UMP biosynthesis via de novo pathway; UMP from orotate: step 1/2. In terms of biological role, catalyzes the transfer of a ribosyl phosphate group from 5-phosphoribose 1-diphosphate to orotate, leading to the formation of orotidine monophosphate (OMP). This Helicobacter acinonychis (strain Sheeba) protein is Orotate phosphoribosyltransferase.